A 205-amino-acid polypeptide reads, in one-letter code: Large ribosomal subunit protein uL4 (205 aa).

Residues 44–77 (KRQGTSKVKNRSAVRGGGKKPWRQKGTGRARQGS) are disordered. The segment covering 51–71 (VKNRSAVRGGGKKPWRQKGTG) has biased composition (basic residues).

Belongs to the universal ribosomal protein uL4 family. As to quaternary structure, part of the 50S ribosomal subunit.

In terms of biological role, one of the primary rRNA binding proteins, this protein initially binds near the 5'-end of the 23S rRNA. It is important during the early stages of 50S assembly. It makes multiple contacts with different domains of the 23S rRNA in the assembled 50S subunit and ribosome. Forms part of the polypeptide exit tunnel. In Lactobacillus delbrueckii subsp. bulgaricus (strain ATCC 11842 / DSM 20081 / BCRC 10696 / JCM 1002 / NBRC 13953 / NCIMB 11778 / NCTC 12712 / WDCM 00102 / Lb 14), this protein is Large ribosomal subunit protein uL4.